A 107-amino-acid chain; its full sequence is uncharacterized protein (107 aa).

A helical membrane pass occupies residues 25–42; the sequence is LSLCSVLLSWLICAMCLW.

The protein localises to the host membrane. This is an uncharacterized protein from Galliformes (FAdV-1).